Here is a 452-residue protein sequence, read N- to C-terminus: tRNA modification GTPase MnmE (452 aa).

Residues Arg21, Glu78, and Lys118 each contribute to the (6S)-5-formyl-5,6,7,8-tetrahydrofolate site. In terms of domain architecture, TrmE-type G spans 214–375 (GMKVVIAGRP…LREHLKQAMG (162 aa)). Asn224 serves as a coordination point for K(+). GTP is bound by residues 224–229 (NAGKSS), 243–249 (TDIAGTT), and 268–271 (DTAG). Residue Ser228 participates in Mg(2+) binding. The K(+) site is built by Thr243, Ile245, and Thr248. Thr249 contributes to the Mg(2+) binding site. Position 452 (Lys452) interacts with (6S)-5-formyl-5,6,7,8-tetrahydrofolate.

Belongs to the TRAFAC class TrmE-Era-EngA-EngB-Septin-like GTPase superfamily. TrmE GTPase family. As to quaternary structure, homodimer. Heterotetramer of two MnmE and two MnmG subunits. K(+) serves as cofactor.

Its subcellular location is the cytoplasm. In terms of biological role, exhibits a very high intrinsic GTPase hydrolysis rate. Involved in the addition of a carboxymethylaminomethyl (cmnm) group at the wobble position (U34) of certain tRNAs, forming tRNA-cmnm(5)s(2)U34. In Haemophilus influenzae (strain PittGG), this protein is tRNA modification GTPase MnmE.